Consider the following 213-residue polypeptide: MGVCVFFPLCLPCPGALTYIREAQFISSWTPADPRHKQLKMFLQRFVTVGGAAIGARSTMGAMGAIGAIGAKGTMNNIGRRMYHPKVIEHYTHPRNVGSMDKTLPNVGTGLVGAPACGDVMRLQIKVNDKTGVIEDVKFKTFGCGSAIASSSYMTELVHGMTLDDAAKIKNTTIAKELSLPPVKLHCSMLAEDAIKAAIKDYKSKRTSTTTLH.

Belongs to the NifU family. As to quaternary structure, component of the core Fe-S cluster (ISC) assembly machinery. The cofactor is [2Fe-2S] cluster.

The protein localises to the mitochondrion matrix. The protein operates within cofactor biosynthesis; iron-sulfur cluster biosynthesis. Its function is as follows. Scaffold protein for the de novo synthesis of iron-sulfur (Fe-S) clusters within mitochondria, which is required for maturation of both mitochondrial and cytoplasmic [2Fe-2S] and [4Fe-4S] proteins. First, a [2Fe-2S] cluster is transiently assembled on the scaffold protein ISU1. In a second step, the cluster is released from ISU1, transferred to a glutaredoxin, followed by the formation of mitochondrial [2Fe-2S] proteins, the synthesis of [4Fe-4S] clusters and their target-specific insertion into the recipient apoproteins. Cluster assembly on ISU1 depends on the function of the cysteine desulfurase complex NFS1-ISD11, which serves as the sulfur donor for cluster synthesis, the iron-binding protein frataxin as the putative iron donor, and the electron transfer chain comprised of ferredoxin reductase and ferredoxin, which receive their electrons from NADH. The chain is Iron sulfur cluster assembly protein 1, mitochondrial (ISU1) from Candida glabrata (strain ATCC 2001 / BCRC 20586 / JCM 3761 / NBRC 0622 / NRRL Y-65 / CBS 138) (Yeast).